Consider the following 202-residue polypeptide: Proteasome subunit beta 1 (202 aa).

Residues 1-8 constitute a propeptide, removed in mature form; by autocatalysis; the sequence is MGEVVLPG. Thr9 (nucleophile) is an active-site residue.

The protein belongs to the peptidase T1B family. As to quaternary structure, the 20S proteasome core is composed of 14 alpha and 14 beta subunits that assemble into four stacked heptameric rings, resulting in a barrel-shaped structure. The two inner rings, each composed of seven catalytic beta subunits, are sandwiched by two outer rings, each composed of seven alpha subunits. The catalytic chamber with the active sites is on the inside of the barrel. Has a gated structure, the ends of the cylinder being occluded by the N-termini of the alpha-subunits. Is capped at one or both ends by the proteasome regulatory ATPase, PAN.

It localises to the cytoplasm. It catalyses the reaction Cleavage of peptide bonds with very broad specificity.. Its activity is regulated as follows. The formation of the proteasomal ATPase PAN-20S proteasome complex, via the docking of the C-termini of PAN into the intersubunit pockets in the alpha-rings, triggers opening of the gate for substrate entry. Interconversion between the open-gate and close-gate conformations leads to a dynamic regulation of the 20S proteasome proteolysis activity. Its function is as follows. Component of the proteasome core, a large protease complex with broad specificity involved in protein degradation. The protein is Proteasome subunit beta 1 of Desulfurococcus amylolyticus (strain DSM 18924 / JCM 16383 / VKM B-2413 / 1221n) (Desulfurococcus kamchatkensis).